The following is a 123-amino-acid chain: Small ribosomal subunit protein uS13 (123 aa).

The segment at 94–123 (RRGLPVRGQHTKNNARTRKGPARAIAGKKK) is disordered.

Belongs to the universal ribosomal protein uS13 family. As to quaternary structure, part of the 30S ribosomal subunit. Forms a loose heterodimer with protein S19. Forms two bridges to the 50S subunit in the 70S ribosome.

In terms of biological role, located at the top of the head of the 30S subunit, it contacts several helices of the 16S rRNA. In the 70S ribosome it contacts the 23S rRNA (bridge B1a) and protein L5 of the 50S subunit (bridge B1b), connecting the 2 subunits; these bridges are implicated in subunit movement. Contacts the tRNAs in the A and P-sites. This is Small ribosomal subunit protein uS13 from Oenococcus oeni (strain ATCC BAA-331 / PSU-1).